An 877-amino-acid polypeptide reads, in one-letter code: Putative ankyrin repeat protein R748 (877 aa).

ANK repeat units lie at residues 44-74, 79-109, 115-145, 202-231, 243-272, and 282-311; these read IRHI…TINV, QNNT…NINY, IGIS…AIQQ, MGYR…SINE, NNND…PIHM, and LVPT…SIQA. A disordered region spans residues 525-579; that stretch reads DSDEDPVCDSNESDNSNDINNHVKSDNKLNSSNDYYDEDDSEDNYNNQSDDEPLV. Positions 533-544 are enriched in low complexity; the sequence is DSNESDNSNDIN.

This is Putative ankyrin repeat protein R748 from Acanthamoeba polyphaga mimivirus (APMV).